Reading from the N-terminus, the 254-residue chain is Uridine-cytidine kinase 1 (254 aa).

The disordered stretch occupies residues 1-29 (MASAGGDECEGAAPEADRPHQRPFLIGVS). 30–38 (GGTASGKST) contributes to the ATP binding site. Substrate is bound by residues aspartate 87, tyrosine 115, histidine 120, arginine 146, arginine 155, and glutamine 163. Residue aspartate 192 coordinates ATP. The tract at residues 224-254 (SYKRTFSEPGDHPGMLTSGKRSHLESSSRPH) is disordered. Threonine 228 is modified (phosphothreonine). The residue at position 230 (serine 230) is a Phosphoserine. The span at 245–254 (SHLESSSRPH) shows a compositional bias: basic and acidic residues.

The protein belongs to the uridine kinase family.

It carries out the reaction uridine + ATP = UMP + ADP + H(+). The enzyme catalyses cytidine + ATP = CMP + ADP + H(+). It participates in pyrimidine metabolism; CTP biosynthesis via salvage pathway; CTP from cytidine: step 1/3. The protein operates within pyrimidine metabolism; UMP biosynthesis via salvage pathway; UMP from uridine: step 1/1. Phosphorylates uridine and cytidine to uridine monophosphate and cytidine monophosphate. Does not phosphorylate deoxyribonucleosides or purine ribonucleosides. Can use ATP or GTP as a phosphate donor. The protein is Uridine-cytidine kinase 1 (UCK1) of Macaca fascicularis (Crab-eating macaque).